Here is a 710-residue protein sequence, read N- to C-terminus: Adenylosuccinate synthetase (710 aa).

2 disordered regions span residues methionine 1–lysine 57 and methionine 82–cysteine 112. Low complexity predominate over residues asparagine 11–serine 25. Over residues serine 32–serine 43 the composition is skewed to polar residues. GTP is bound by residues glycine 180 to lysine 186 and glycine 210 to threonine 212. Aspartate 181 acts as the Proton acceptor in catalysis. Mg(2+) contacts are provided by aspartate 181 and glycine 210. Residues aspartate 181 to lysine 184, asparagine 208 to histidine 211, threonine 295, lysine 309, glutamine 421, threonine 437, and lysine 567 contribute to the IMP site. The active-site Proton donor is histidine 211. Substrate is bound at residue alanine 563–arginine 569. GTP is bound by residues arginine 569 and glycine 697–glycine 699.

This sequence belongs to the adenylosuccinate synthetase family. As to quaternary structure, homodimer. Requires Mg(2+) as cofactor.

Its subcellular location is the cytoplasm. It catalyses the reaction IMP + L-aspartate + GTP = N(6)-(1,2-dicarboxyethyl)-AMP + GDP + phosphate + 2 H(+). It functions in the pathway purine metabolism; AMP biosynthesis via de novo pathway; AMP from IMP: step 1/2. Plays an important role in the salvage pathway for purine nucleotide biosynthesis. Catalyzes the first committed step in the biosynthesis of AMP from IMP. The protein is Adenylosuccinate synthetase of Leishmania braziliensis.